The following is a 30-amino-acid chain: Chassatide C9 (30 aa).

Residues 1–30 (GIPCGESCVFIPCVTTVIGCSCKDKVCYNN) constitute a cross-link (cyclopeptide (Gly-Asn)). 3 disulfides stabilise this stretch: C4–C20, C8–C22, and C13–C27.

This is a cyclic peptide.

Probably participates in a plant defense mechanism. This is Chassatide C9 from Chassalia chartacea (Chassalia curviflora).